The sequence spans 604 residues: uncharacterized protein (604 aa).

The ABC transmembrane type-1 domain maps to 49–332 (LILVMLMVVI…LANQFNTMLS (284 aa)). 4 consecutive transmembrane segments (helical) span residues 50-70 (ILVM…PFVI), 86-106 (LIPV…SLWF), 172-192 (VITF…LTLI), and 288-308 (IAAI…SIVV). An ABC transporter domain is found at 366–600 (IEFRDVSFGY…KGFYSDLYES (235 aa)). 399 to 406 (GPTGAGKT) is a binding site for ATP. Residues 510–530 (LISIARAVLADPVLLILDEAT) traverse the membrane as a helical segment.

The protein belongs to the ABC transporter superfamily.

It is found in the cell membrane. This is an uncharacterized protein from Bacillus subtilis (strain 168).